Consider the following 211-residue polypeptide: 2,3-bisphosphoglycerate-dependent phosphoglycerate mutase (211 aa).

Substrate is bound by residues 9 to 16, 22 to 23, Arg61, 88 to 91, Lys99, 115 to 116, and 159 to 160; these read RHGQSDWN, TG, ERDY, RR, and GN. His10 (tele-phosphohistidine intermediate) is an active-site residue. The Proton donor/acceptor role is filled by Glu88.

This sequence belongs to the phosphoglycerate mutase family. BPG-dependent PGAM subfamily. As to quaternary structure, homodimer.

It catalyses the reaction (2R)-2-phosphoglycerate = (2R)-3-phosphoglycerate. Its pathway is carbohydrate degradation; glycolysis; pyruvate from D-glyceraldehyde 3-phosphate: step 3/5. Catalyzes the interconversion of 2-phosphoglycerate and 3-phosphoglycerate. The protein is 2,3-bisphosphoglycerate-dependent phosphoglycerate mutase of Rhizobium meliloti (strain 1021) (Ensifer meliloti).